A 650-amino-acid chain; its full sequence is Primary amine oxidase 1 (650 aa).

The first 19 residues, 1 to 19 (MNTSILAILFLIQCVFTLG), serve as a signal peptide directing secretion. N-linked (GlcNAc...) asparagine glycans are attached at residues asparagine 2, asparagine 34, asparagine 62, and asparagine 149. The cysteines at positions 155 and 176 are disulfide-linked. Asparagine 235 is a glycosylation site (N-linked (GlcNAc...) asparagine). 308–319 (FMDIGEFGFGRS) is a substrate binding site. Aspartate 310 functions as the Proton acceptor in the catalytic mechanism. Cysteines 329 and 355 form a disulfide. 395 to 400 (LGNYDY) lines the substrate pocket. Tyrosine 398 functions as the Schiff-base intermediate with substrate; via topaquinone in the catalytic mechanism. Tyrosine 398 bears the 2',4',5'-topaquinone mark. 2 residues coordinate Cu cation: histidine 453 and histidine 455. Positions 462 and 464 each coordinate Mn(2+). The N-linked (GlcNAc...) asparagine glycan is linked to asparagine 486. The Mn(2+) site is built by aspartate 607 and isoleucine 608. Histidine 618 is a Cu cation binding site.

This sequence belongs to the copper/topaquinone oxidase family. In terms of assembly, homodimer. Requires L-topaquinone as cofactor. Cu cation is required as a cofactor. The cofactor is Zn(2+). Mn(2+) serves as cofactor. Topaquinone (TPQ) is generated by copper-dependent autoxidation of a specific tyrosyl residue. In terms of tissue distribution, expressed in the vascular tissues at the division/differentiation transition zone.

It is found in the secreted. It carries out the reaction a primary methyl amine + O2 + H2O = an aldehyde + H2O2 + NH4(+). Its activity is regulated as follows. Repressed by semi-carbazide, a specific and irreversible inhibitor of copper amine oxidases. Its function is as follows. Oxidizes preferentially the aliphatic diamine putrescine with production of the corresponding aldehyde, ammonia and hydrogen peroxide. May be involved in the regulation of developmental programmed cell death (PCD) in both vascular tissue and the root cap. Required for jasmonic acid-(MeJA) mediated early protoxylem differentiation associated with putrescine levels reduction and H(2)O(2) accumulation in roots. The sequence is that of Primary amine oxidase 1 from Arabidopsis thaliana (Mouse-ear cress).